We begin with the raw amino-acid sequence, 537 residues long: Probable metalloreductase AIM14 (537 aa).

The next 7 helical transmembrane spans lie at 20-40, 58-78, 95-112, 133-155, 167-187, 194-216, and 221-238; these read GFFIFALTIIQTIFFLQVKFI, ITNPPIWLMVTVWLLIVIFTG, RYGRMAYCLIPLNIYLVL, KWTSRIIVFCSTIHAAGYVYKWI, FLNLLGVVVFVFLVVLAIISI, VYSTFYLIHNVTAWSMVILITFH, and VTVFAVISLILLGYQLYL. Residues 97–213 form the Ferric oxidoreductase domain; that stretch reads GRMAYCLIPL…VTAWSMVILI (117 aa). Residues 187 to 363 enclose the FAD-binding FR-type domain; the sequence is IRPFRRKVYS…GGSGISLGLP (177 aa). Positions 432–475 are disordered; sequence EEQGHGLLNNDNENGIELQNMPKTNEESSEANSTNSKNNKDNQE.

It belongs to the ferric reductase (FRE) family. AIM14 subfamily.

It is found in the membrane. Probable cell surface metalloreductase. May be involved in iron or copper homeostasis. The sequence is that of Probable metalloreductase AIM14 (AIM14) from Candida dubliniensis (strain CD36 / ATCC MYA-646 / CBS 7987 / NCPF 3949 / NRRL Y-17841) (Yeast).